A 193-amino-acid polypeptide reads, in one-letter code: Putative zinc finger protein 726P1 (193 aa).

The C2H2-type 1; degenerate zinc finger occupies 18–40; the sequence is YKCKKCGKTFNWSSILTNNKKIH. The C2H2-type 2; atypical zinc finger occupies 46-68; it reads YKCEECGKAFKQHSTLTTHKIIC. The segment at 74–96 adopts a C2H2-type 3; degenerate zinc-finger fold; the sequence is YRCEECGKAFCQPSTLTRYKRMH. A C2H2-type 4 zinc finger spans residues 102–124; it reads YKCEECGKAFTQFSTLTKHKRIH. A C2H2-type 5; degenerate zinc finger spans residues 130–152; that stretch reads YKCEESGKAFIWSSGLTEHRRVH. Residues 158 to 180 form a C2H2-type 6 zinc finger; it reads YKCEECGKALIQFSTLTRHKRIH.

The sequence is that of Putative zinc finger protein 726P1 (ZNF726P1) from Homo sapiens (Human).